A 78-amino-acid polypeptide reads, in one-letter code: Gas vesicle protein A (78 aa).

The protein belongs to the gas vesicle GvpA family. The gas vesicle shell is 2 nm thick and consists of a single layer of this protein. It forms helical ribs nearly perpendicular to the long axis of the vesicle.

It localises to the gas vesicle shell. Its function is as follows. Gas vesicles are hollow, gas filled proteinaceous nanostructures found in some microorganisms. During planktonic growth they allow positioning of the organism at a favorable depth for light or nutrient acquisition. GvpA forms the protein shell. The protein is Gas vesicle protein A of Halorubrum vacuolatum (Natronobacterium vacuolatum).